The following is a 405-amino-acid chain: Eukaryotic initiation factor 4A (405 aa).

A Q motif motif is present at residues 32–60 (PTFESMGLREELLRGIFNYGFEKPSAIQQ). Residues 63–233 (ILPIIKGRDT…EKFMTKPVRI (171 aa)) enclose the Helicase ATP-binding domain. 76–83 (AQSGTGKT) is an ATP binding site. The DEAD box signature appears at 181 to 184 (DEAD). The Helicase C-terminal domain occupies 244–405 (GIKQFFVSVE…EMPVNFASII (162 aa)).

This sequence belongs to the DEAD box helicase family. eIF4A subfamily.

The protein resides in the cytoplasm. It carries out the reaction ATP + H2O = ADP + phosphate + H(+). Functionally, ATP-dependent RNA helicase which is a subunit of the eIF4F complex involved in cap recognition and is required for mRNA binding to ribosome. In the current model of translation initiation, eIF4A unwinds RNA secondary structures in the 5'-UTR of mRNAs which is necessary to allow efficient binding of the small ribosomal subunit, and subsequent scanning for the initiator codon. This is Eukaryotic initiation factor 4A (tifA) from Dictyostelium discoideum (Social amoeba).